The primary structure comprises 560 residues: Dihydroxy-acid dehydratase (560 aa).

Cysteine 52 is a binding site for [2Fe-2S] cluster. Aspartate 84 contacts Mg(2+). Cysteine 125 serves as a coordination point for [2Fe-2S] cluster. Residues aspartate 126 and lysine 127 each coordinate Mg(2+). Lysine 127 bears the N6-carboxylysine mark. A [2Fe-2S] cluster-binding site is contributed by cysteine 197. Glutamate 448 contacts Mg(2+). Residue serine 474 is the Proton acceptor of the active site.

This sequence belongs to the IlvD/Edd family. As to quaternary structure, homodimer. The cofactor is [2Fe-2S] cluster. Requires Mg(2+) as cofactor.

The catalysed reaction is (2R)-2,3-dihydroxy-3-methylbutanoate = 3-methyl-2-oxobutanoate + H2O. It carries out the reaction (2R,3R)-2,3-dihydroxy-3-methylpentanoate = (S)-3-methyl-2-oxopentanoate + H2O. It functions in the pathway amino-acid biosynthesis; L-isoleucine biosynthesis; L-isoleucine from 2-oxobutanoate: step 3/4. Its pathway is amino-acid biosynthesis; L-valine biosynthesis; L-valine from pyruvate: step 3/4. Its function is as follows. Functions in the biosynthesis of branched-chain amino acids. Catalyzes the dehydration of (2R,3R)-2,3-dihydroxy-3-methylpentanoate (2,3-dihydroxy-3-methylvalerate) into 2-oxo-3-methylpentanoate (2-oxo-3-methylvalerate) and of (2R)-2,3-dihydroxy-3-methylbutanoate (2,3-dihydroxyisovalerate) into 2-oxo-3-methylbutanoate (2-oxoisovalerate), the penultimate precursor to L-isoleucine and L-valine, respectively. The chain is Dihydroxy-acid dehydratase from Francisella tularensis subsp. tularensis (strain WY96-3418).